A 306-amino-acid chain; its full sequence is Porphobilinogen deaminase (306 aa).

Position 239 is an S-(dipyrrolylmethanemethyl)cysteine (Cys-239).

The protein belongs to the HMBS family. In terms of assembly, monomer. Dipyrromethane serves as cofactor.

The enzyme catalyses 4 porphobilinogen + H2O = hydroxymethylbilane + 4 NH4(+). The protein operates within porphyrin-containing compound metabolism; protoporphyrin-IX biosynthesis; coproporphyrinogen-III from 5-aminolevulinate: step 2/4. In terms of biological role, tetrapolymerization of the monopyrrole PBG into the hydroxymethylbilane pre-uroporphyrinogen in several discrete steps. The protein is Porphobilinogen deaminase of Helicobacter acinonychis (strain Sheeba).